Reading from the N-terminus, the 409-residue chain is Tyrosine--tRNA ligase (409 aa).

Residues 54-63 carry the 'HIGH' region motif; sequence PTAPDIHLGH. The 'KMSKS' region signature appears at 238–242; the sequence is KMSKS. Lysine 241 serves as a coordination point for ATP. One can recognise an S4 RNA-binding domain in the interval 347–407; it reads QGILRILREA…GKRKFARVKL (61 aa).

Belongs to the class-I aminoacyl-tRNA synthetase family. TyrS type 2 subfamily. In terms of assembly, homodimer.

It is found in the cytoplasm. It carries out the reaction tRNA(Tyr) + L-tyrosine + ATP = L-tyrosyl-tRNA(Tyr) + AMP + diphosphate + H(+). Catalyzes the attachment of tyrosine to tRNA(Tyr) in a two-step reaction: tyrosine is first activated by ATP to form Tyr-AMP and then transferred to the acceptor end of tRNA(Tyr). The chain is Tyrosine--tRNA ligase from Bordetella parapertussis (strain 12822 / ATCC BAA-587 / NCTC 13253).